The chain runs to 346 residues: Acetyl-coenzyme A carboxylase carboxyl transferase subunit beta (346 aa).

Positions 24–292 constitute a CoA carboxyltransferase N-terminal domain; that stretch reads LWIKCPKSGD…LPEVEPIAVA (269 aa). Acidic residues predominate over residues 300 to 311; that stretch reads AEAEAAPDEVVE. The interval 300-346 is disordered; sequence AEAEAAPDEVVEVEAPAVDEIVEEKPAATKAKPRSKAKSKAAPKTDE. Positions 330–340 are enriched in basic residues; that stretch reads AKPRSKAKSKA.

It belongs to the AccD/PCCB family. As to quaternary structure, acetyl-CoA carboxylase is a heterohexamer composed of biotin carboxyl carrier protein (AccB), biotin carboxylase (AccC) and two subunits each of ACCase subunit alpha (AccA) and ACCase subunit beta (AccD).

It is found in the cytoplasm. The catalysed reaction is N(6)-carboxybiotinyl-L-lysyl-[protein] + acetyl-CoA = N(6)-biotinyl-L-lysyl-[protein] + malonyl-CoA. Its pathway is lipid metabolism; malonyl-CoA biosynthesis; malonyl-CoA from acetyl-CoA: step 1/1. Functionally, component of the acetyl coenzyme A carboxylase (ACC) complex. Biotin carboxylase (BC) catalyzes the carboxylation of biotin on its carrier protein (BCCP) and then the CO(2) group is transferred by the transcarboxylase to acetyl-CoA to form malonyl-CoA. The chain is Acetyl-coenzyme A carboxylase carboxyl transferase subunit beta from Hirschia baltica (strain ATCC 49814 / DSM 5838 / IFAM 1418).